Reading from the N-terminus, the 640-residue chain is Chaperone protein DnaK (640 aa).

At threonine 199 the chain carries Phosphothreonine; by autocatalysis. Low complexity predominate over residues 606-621 (QQAAGAGAQQADGTGK). Residues 606-640 (QQAAGAGAQQADGTGKAADDGVVDAEFEEVKEDNK) are disordered. Acidic residues predominate over residues 626 to 640 (GVVDAEFEEVKEDNK).

Belongs to the heat shock protein 70 family.

Its function is as follows. Acts as a chaperone. This is Chaperone protein DnaK from Cellvibrio japonicus (strain Ueda107) (Pseudomonas fluorescens subsp. cellulosa).